Reading from the N-terminus, the 2515-residue chain is MRLTIPPSSMEEPKGKLSEEENVCLFPKLTQVGLPAPASVAIETVGLGLEISRAMNERFSYDRLLELQVMLSTVWAIVIHRFVEANPVFFAMVIDDEVSASTESCRNLWKTLIDPTTSVGVLNDIKRWEICPLAEHHQGSFNTGLFILSKNLETAQMLDVNLVAQPKGSEFTLELVYQPKHLSPFHAQHLMSAVSSAIHGVASAEPNRSLCDISLCTSSQQKQILYWQNSRLKEGPSLAMYQIVAELATRQPGAQAVQSSKSALTYLELDDLSSRLAIHLQARYNLAPGAMIMLCATKDVWAVVAMLAINKTGACFVPCDASHPVSRRQTMAGKCQSELALVSPEHETLFQGIIKESFIISEATVTKLPQETRDSWTVGERFPVAPSTPAYCFFTSGSLGEPKGCLGTHSALAAVAHQVPALRMDTKSRVLQFAKFGFGISFIEIFCTLAAGGTVCIASEHERLNALDAAIRRMEVNWALITPTLAQSLSPEEIPTLRKLFLGGEAPNDDLISRWQSKASLFQVFGTTEMAGVTMVSSEITSTAQRKIVGFPANSRIWLVESTGKDSNDTRLAPIGAVAELLIEGPSLAEGYLGDPVRTQASFLSLPSWLPDGYSGSTRLYKTGDLVRYNGDGSLSYIGRMGTQVKLRGQRIELEEVECHLVRLLPGTHSFSEARLVIALVVEPRGDAEKRTLAAFVLVPPKVNSPRSSDTGRLEFVKPDTPHLYEELEDIRQRLQGTLPSFMVPQLLFVLTDVPRTVTGKIDRSGLQRQINALPYDELRRISGRRVDMQVPGSEVEHLIHAIVCEILAIRSDQVSMRDDFFHLGGNSMSAIKLAAAAKRRSLKLVVADIFKHSVLADMATVALKTSNGVHAHTTIHGTTIHGAPTKTTLERFKLLSEYSVTREDINEAVATQCGISYSSLTVDAYPCSPLQEGMMSMTEKSATMYRAQVVCKLHSGIQIDRFQAAWEGVVENNDILRTRLISVSSKGMWQIVISEPFEWDRDASRAVSDSMGLGTRLVRAAIETSKDGAVFILTIHHVLCDLWTIRLLLDQLWSSYDSITDGVAGPNYYRPFIEYVLERSRDPASASYWKARFSGLEAEAFPRLPQPDLSPSPDEKTTCHINLPPLVTGGITVATYLRLAWAMVVSHHTAVDDVVFGETLNGRSGRLQEQSDESLEKIVGPAIVTVPQRILLDPERSVAETLSLIQEQQTQMISFEQVGLQHIRRLSPEADCACMFQSHLVFQPAWKPPGQLFKSVEAGASEVGGFSSYALGLECGLSEDENEVDITAYFDSRVVSRAQAARLLNHLEMVLQSLVQEPYQTIRSVPHITPEDLDQIHAWNVTLPDGLKECAHEAIRKQSQETPSAPAIRAWDGDLTYEELEHYSNQIAVAIVDRGIRQGSLIPLLFEKSMWMTVAMIGVNKAGGAFVPMDSAQPLQRLRVIAELTECTVILCSKSNTELAKQISPNAIILPVPGCREGGSIMQDSGQGLVDLQCLPKVQPHDLMYAVFTSGSTGTPKGVLIEHGSYCTAARECSSAHEIDRQSRMLQFASYSFDAFLAESLNTLVVGGCVCVPSEKDRQNGLAKAMREMQVTHAMLTPAISRLFRHEDVPSLRSLILMGEAMRSADFDYWGSHIQLFNGYGPTECTIALSCREYQAGVHVNDIGWPRAAAAWIIDPRNPNRLMPIGAVGELVVEGPPVARGYLKSPDQTSKAFISPPSWRPQTHQSHRMYRTGDLVSYTEDRSLRIVGRMNDQIKLRSQRLERGEVESRLRQFWQPPGVEVAVDVIVPAGDADRVSLAAFIVQEGSEQNNSDKNADHGTDCRSLCRNPTAEFSRVATQVEAQLQQELPRFMVPSIFVPVSRMPHMPSGKIDRPRLKRELEASPWEELRRYLPSAAPSRLATTNEERTLQEIWAQVLHLPSSKVGIDDNFFHLGGDSVNGMQAVVQARARNIPHTLEEIFRWKTIAAILSHLTGRKHQERPPRHHDSNLTKTNNHLESFRGTLARSRLPFEGVEDIYPCGPIQQNILLVHSRRPAFYHVAFTWEIHDATVDMVVRAVKQLIARHAIFRTRFLEPDIVDGSFLQIVLRQGQQDIPIRSVSEGLIDFPGDFQPTARCPSQFTIYHRDWSSVHVRLDITHALWDGGPATVVERELGLASHSKPLPPDPPLYRDYISYVQSQDLAAGEAFWSSHIKDTSPCHFPSLRATRMYEPDVPQDLHFELDQHAEVGPFCRRHNVTAPNMFCLAWGLVLRAVTSMDEVCFGNVVSGRDLPLTGALEMVGPLINLLPCRINLREGTVIETLQRIYHDYAACLSHQAFPIANLPHSSGRSALTLFNTQLSIRRATTASQPGEEAPKACLRAIQSWDPHECRINVYVIMEESRTRVEMRYWKSAMSPAQAALIEKCFSAAVSQILAHGDQPLTELGILPPEEQKRVWEPSLSAAVVRLRELWAKVLDIPHHLIGGEDDFFRLGGNSVRALQVTGLAREAGMDLRVADVFTASTLHAMARRSLVVSQSG.

Residues 246–648 (ELATRQPGAQ…GRMGTQVKLR (403 aa)) form an adenylation 1 region. One can recognise a Carrier 1 domain in the interval 794-867 (SEVEHLIHAI…DMATVALKTS (74 aa)). The residue at position 828 (serine 828) is an O-(pantetheine 4'-phosphoryl)serine. Positions 924–1332 (DAYPCSPLQE…IRSVPHITPE (409 aa)) are condensation 1. The segment at 1357-1758 (RKQSQETPSA…GRMNDQIKLR (402 aa)) is adenylation 2. Residues 1900–1976 (LATTNEERTL…AILSHLTGRK (77 aa)) form the Carrier 2 domain. The residue at position 1937 (serine 1937) is an O-(pantetheine 4'-phosphoryl)serine. Residues 2013–2431 (VEDIYPCGPI…LGILPPEEQK (419 aa)) are condensation 2. Residues 2436 to 2512 (PSLSAAVVRL…AMARRSLVVS (77 aa)) form the Carrier 3 domain. Serine 2473 is modified (O-(pantetheine 4'-phosphoryl)serine).

Belongs to the NRP synthetase family.

It functions in the pathway secondary metabolite biosynthesis. Its function is as follows. Nonribosomal peptide synthetase; part of the gene cluster that mediates the biosynthesis of terreazepine,. The first step of terreazepine biosynthesis is catalyzed by the indoleamine 2,3-dioxygenase tpzB which produces N-formyl-kynurenine through the catabolism of tryptophan. The two-module NRPS tpzA then utilizes anthranilate and kynurenine to assemble terreazepine. The first adenylation domain of tpzA (A1) loads anthranilate onto the T1 domain, while A2 loads kynurenine, generated through spontaneous nonenzymatic deformylation of the tzpB-supplied N-formyl-kynurenine. TpzA produces a 2:1 mixture of S-R enantiomers, which suggests that the A2 domain accepts both D- and L-kynurenine. The peptide bond formation between the tethered amino acids is catalyzed by the first condensation domain (C1) between anthranilate's carbonyl carbon and kynurenine's aliphatic primary amine. The second C domain (C2) catalyzes the final cyclization event between the aromatic amine of kynurenine and the tethered carbonyl carbon, yielding the final terreazepine product. The T3 domain may facilitate the interaction with downstream tailoring enzymes. In Aspergillus terreus (strain NIH 2624 / FGSC A1156), this protein is Nonribosomal peptide synthetase tpzA.